Consider the following 1235-residue polypeptide: ATP-dependent helicase/nuclease subunit A (1235 aa).

One can recognise a UvrD-like helicase ATP-binding domain in the interval 12-482 (TLWTDDQWKA…IDLSQNFRSR (471 aa)). Residue 33-40 (AAAGSGKT) participates in ATP binding. Positions 509-800 (AAELTLGANF…RMMTIHASKG (292 aa)) constitute a UvrD-like helicase C-terminal domain.

This sequence belongs to the helicase family. AddA subfamily. Heterodimer of AddA and AddB/RexB. The cofactor is Mg(2+).

The catalysed reaction is Couples ATP hydrolysis with the unwinding of duplex DNA by translocating in the 3'-5' direction.. It carries out the reaction ATP + H2O = ADP + phosphate + H(+). In terms of biological role, the heterodimer acts as both an ATP-dependent DNA helicase and an ATP-dependent, dual-direction single-stranded exonuclease. Recognizes the chi site generating a DNA molecule suitable for the initiation of homologous recombination. The AddA nuclease domain is required for chi fragment generation; this subunit has the helicase and 3' -&gt; 5' nuclease activities. The chain is ATP-dependent helicase/nuclease subunit A from Listeria welshimeri serovar 6b (strain ATCC 35897 / DSM 20650 / CCUG 15529 / CIP 8149 / NCTC 11857 / SLCC 5334 / V8).